The primary structure comprises 259 residues: ATP synthase subunit a (259 aa).

5 consecutive transmembrane segments (helical) span residues 29-49 (TVNIDSMIFSVILGALFIWIF), 90-110 (IAPLALTVFIWVFLMNLMDLI), 134-154 (DVNITMSMALGVFALIIIYSI), 208-228 (LVFILIAGLLPWWSQWLLSVP), and 230-250 (ALFHILVITLQAFIFMVLTIV).

Belongs to the ATPase A chain family. F-type ATPases have 2 components, CF(1) - the catalytic core - and CF(0) - the membrane proton channel. CF(1) has five subunits: alpha(3), beta(3), gamma(1), delta(1), epsilon(1). CF(0) has three main subunits: a(1), b(2) and c(9-12). The alpha and beta chains form an alternating ring which encloses part of the gamma chain. CF(1) is attached to CF(0) by a central stalk formed by the gamma and epsilon chains, while a peripheral stalk is formed by the delta and b chains.

It localises to the cell inner membrane. In terms of biological role, key component of the proton channel; it plays a direct role in the translocation of protons across the membrane. This Aeromonas salmonicida (strain A449) protein is ATP synthase subunit a.